A 261-amino-acid polypeptide reads, in one-letter code: Thiamine thiazole synthase (261 aa).

NAD(+) is bound by residues S40, E59–R60, G67, V133, and H159–D161. 2 residues coordinate Fe cation: D161 and H176. NAD(+) contacts are provided by S179 and M226. R236 is a binding site for glycine.

Belongs to the THI4 family. Homooctamer; tetramer of dimers. Fe(2+) serves as cofactor.

The catalysed reaction is hydrogen sulfide + glycine + NAD(+) = ADP-5-ethyl-4-methylthiazole-2-carboxylate + nicotinamide + 3 H2O + H(+). The protein operates within cofactor biosynthesis; thiamine diphosphate biosynthesis. Its function is as follows. Involved in the biosynthesis of the thiazole moiety of thiamine. Catalyzes the conversion of NAD and glycine to adenosine diphosphate 5-(2-hydroxyethyl)-4-methylthiazole-2-carboxylate (ADT), an adenylated thiazole intermediate, using free sulfide as a source of sulfur. In Methanococcus maripaludis (strain C5 / ATCC BAA-1333), this protein is Thiamine thiazole synthase.